Reading from the N-terminus, the 357-residue chain is uncharacterized protein (357 aa).

Residues 6–32 (CIVCRQKKIKCDRKNPCTNCEQAGEKC) constitute a DNA-binding region (zn(2)-C6 fungal-type).

The protein localises to the nucleus. This is an uncharacterized protein from Schizosaccharomyces pombe (strain 972 / ATCC 24843) (Fission yeast).